A 273-amino-acid chain; its full sequence is Shikimate dehydrogenase (NADP(+)) (273 aa).

Residues 15-17 (SKS) and T62 each bind shikimate. Catalysis depends on K66, which acts as the Proton acceptor. An NADP(+)-binding site is contributed by E78. Shikimate-binding residues include N87 and D103. Residues 127-131 (GAGGA), 150-155 (NRTQEK), and M213 each bind NADP(+). A shikimate-binding site is contributed by Y215. G237 contributes to the NADP(+) binding site.

It belongs to the shikimate dehydrogenase family. In terms of assembly, homodimer.

It catalyses the reaction shikimate + NADP(+) = 3-dehydroshikimate + NADPH + H(+). The protein operates within metabolic intermediate biosynthesis; chorismate biosynthesis; chorismate from D-erythrose 4-phosphate and phosphoenolpyruvate: step 4/7. Functionally, involved in the biosynthesis of the chorismate, which leads to the biosynthesis of aromatic amino acids. Catalyzes the reversible NADPH linked reduction of 3-dehydroshikimate (DHSA) to yield shikimate (SA). The chain is Shikimate dehydrogenase (NADP(+)) from Shewanella woodyi (strain ATCC 51908 / MS32).